Here is a 140-residue protein sequence, read N- to C-terminus: Biopolymer transport protein exbD1 (140 aa).

Over 1–16 the chain is Cytoplasmic; sequence MAFSSGNSGGPMADIN. The helical transmembrane segment at 17–37 threads the bilayer; sequence VTPLVDVMLVLLIIFIITAPL. The Periplasmic segment spans residues 38–140; the sequence is MSHKVKVELP…GFVATKEKGQ (103 aa).

It belongs to the ExbD/TolR family. As to quaternary structure, the accessory proteins ExbB and ExbD seem to form a complex with TonB.

It is found in the cell inner membrane. Functionally, involved in the TonB-dependent energy-dependent transport of various receptor-bound substrates. The protein is Biopolymer transport protein exbD1 (exbD1) of Xanthomonas campestris pv. campestris (strain B100).